The chain runs to 460 residues: V-type ATP synthase beta chain (460 aa).

It belongs to the ATPase alpha/beta chains family.

Functionally, produces ATP from ADP in the presence of a proton gradient across the membrane. The V-type beta chain is a regulatory subunit. In Dictyoglomus turgidum (strain DSM 6724 / Z-1310), this protein is V-type ATP synthase beta chain.